Consider the following 520-residue polypeptide: Non-structural protein PNS7 (520 aa).

The protein is Non-structural protein PNS7 (S6) of Catharanthus roseus (Madagascar periwinkle).